Here is a 360-residue protein sequence, read N- to C-terminus: NADH-quinone oxidoreductase subunit H (360 aa).

The next 8 helical transmembrane spans lie at 22–42, 97–117, 130–150, 170–190, 208–228, 255–275, 292–312, and 336–356; these read ITVG…IPLI, ALFY…WAVI, IGLL…IIAG, ISYE…SGSM, VFSW…ISAV, GFAF…IAAL, WGFI…AVLY, and VLIP…ISPL.

Belongs to the complex I subunit 1 family. As to quaternary structure, NDH-1 is composed of 14 different subunits. Subunits NuoA, H, J, K, L, M, N constitute the membrane sector of the complex.

Its subcellular location is the cell inner membrane. It catalyses the reaction a quinone + NADH + 5 H(+)(in) = a quinol + NAD(+) + 4 H(+)(out). Its function is as follows. NDH-1 shuttles electrons from NADH, via FMN and iron-sulfur (Fe-S) centers, to quinones in the respiratory chain. The immediate electron acceptor for the enzyme in this species is believed to be ubiquinone. Couples the redox reaction to proton translocation (for every two electrons transferred, four hydrogen ions are translocated across the cytoplasmic membrane), and thus conserves the redox energy in a proton gradient. This subunit may bind ubiquinone. This Neisseria meningitidis serogroup C / serotype 2a (strain ATCC 700532 / DSM 15464 / FAM18) protein is NADH-quinone oxidoreductase subunit H.